Consider the following 1358-residue polypeptide: DNA-directed RNA polymerase subunit beta (1358 aa).

Belongs to the RNA polymerase beta chain family. As to quaternary structure, the RNAP catalytic core consists of 2 alpha, 1 beta, 1 beta' and 1 omega subunit. When a sigma factor is associated with the core the holoenzyme is formed, which can initiate transcription.

The catalysed reaction is RNA(n) + a ribonucleoside 5'-triphosphate = RNA(n+1) + diphosphate. In terms of biological role, DNA-dependent RNA polymerase catalyzes the transcription of DNA into RNA using the four ribonucleoside triphosphates as substrates. The protein is DNA-directed RNA polymerase subunit beta of Methylococcus capsulatus (strain ATCC 33009 / NCIMB 11132 / Bath).